A 605-amino-acid chain; its full sequence is UvrABC system protein C (605 aa).

Positions 13–92 (SEPGVYLMKD…IKRYRPKYNV (80 aa)) constitute a GIY-YIG domain. Residues 205–240 (EKLMELLKEKMNESSMNFRFEEAAVYRDKIKSLEEM) form the UVR domain.

The protein belongs to the UvrC family. As to quaternary structure, interacts with UvrB in an incision complex.

Its subcellular location is the cytoplasm. Functionally, the UvrABC repair system catalyzes the recognition and processing of DNA lesions. UvrC both incises the 5' and 3' sides of the lesion. The N-terminal half is responsible for the 3' incision and the C-terminal half is responsible for the 5' incision. The chain is UvrABC system protein C from Clostridioides difficile (strain 630) (Peptoclostridium difficile).